A 169-amino-acid chain; its full sequence is Peptide deformylase (169 aa).

Fe cation-binding residues include Cys-91 and His-133. Glu-134 is a catalytic residue. His-137 provides a ligand contact to Fe cation.

The protein belongs to the polypeptide deformylase family. The cofactor is Fe(2+).

The catalysed reaction is N-terminal N-formyl-L-methionyl-[peptide] + H2O = N-terminal L-methionyl-[peptide] + formate. In terms of biological role, removes the formyl group from the N-terminal Met of newly synthesized proteins. Requires at least a dipeptide for an efficient rate of reaction. N-terminal L-methionine is a prerequisite for activity but the enzyme has broad specificity at other positions. The chain is Peptide deformylase from Salmonella agona (strain SL483).